A 365-amino-acid chain; its full sequence is Alanine racemase (365 aa).

Catalysis depends on K32, which acts as the Proton acceptor; specific for D-alanine. K32 is modified (N6-(pyridoxal phosphate)lysine). R128 contributes to the substrate binding site. Y257 (proton acceptor; specific for L-alanine) is an active-site residue. M305 contacts substrate.

It belongs to the alanine racemase family. Pyridoxal 5'-phosphate is required as a cofactor.

It catalyses the reaction L-alanine = D-alanine. It functions in the pathway amino-acid biosynthesis; D-alanine biosynthesis; D-alanine from L-alanine: step 1/1. Catalyzes the interconversion of L-alanine and D-alanine. May also act on other amino acids. The sequence is that of Alanine racemase (alr) from Francisella philomiragia subsp. philomiragia (strain ATCC 25017 / CCUG 19701 / FSC 153 / O#319-036).